Reading from the N-terminus, the 168-residue chain is Crossover junction endodeoxyribonuclease RuvC (168 aa).

Catalysis depends on residues Asp-10, Glu-70, and Asp-143. Mg(2+) is bound by residues Asp-10, Glu-70, and Asp-143.

Belongs to the RuvC family. As to quaternary structure, homodimer which binds Holliday junction (HJ) DNA. The HJ becomes 2-fold symmetrical on binding to RuvC with unstacked arms; it has a different conformation from HJ DNA in complex with RuvA. In the full resolvosome a probable DNA-RuvA(4)-RuvB(12)-RuvC(2) complex forms which resolves the HJ. The cofactor is Mg(2+).

It is found in the cytoplasm. The catalysed reaction is Endonucleolytic cleavage at a junction such as a reciprocal single-stranded crossover between two homologous DNA duplexes (Holliday junction).. The RuvA-RuvB-RuvC complex processes Holliday junction (HJ) DNA during genetic recombination and DNA repair. Endonuclease that resolves HJ intermediates. Cleaves cruciform DNA by making single-stranded nicks across the HJ at symmetrical positions within the homologous arms, yielding a 5'-phosphate and a 3'-hydroxyl group; requires a central core of homology in the junction. The consensus cleavage sequence is 5'-(A/T)TT(C/G)-3'. Cleavage occurs on the 3'-side of the TT dinucleotide at the point of strand exchange. HJ branch migration catalyzed by RuvA-RuvB allows RuvC to scan DNA until it finds its consensus sequence, where it cleaves and resolves the cruciform DNA. This Roseiflexus sp. (strain RS-1) protein is Crossover junction endodeoxyribonuclease RuvC.